The sequence spans 249 residues: 1-(5-phosphoribosyl)-5-[(5-phosphoribosylamino)methylideneamino] imidazole-4-carboxamide isomerase (249 aa).

The active-site Proton acceptor is the D11. Residue D133 is the Proton donor of the active site.

It belongs to the HisA/HisF family.

It is found in the cytoplasm. It carries out the reaction 1-(5-phospho-beta-D-ribosyl)-5-[(5-phospho-beta-D-ribosylamino)methylideneamino]imidazole-4-carboxamide = 5-[(5-phospho-1-deoxy-D-ribulos-1-ylimino)methylamino]-1-(5-phospho-beta-D-ribosyl)imidazole-4-carboxamide. It participates in amino-acid biosynthesis; L-histidine biosynthesis; L-histidine from 5-phospho-alpha-D-ribose 1-diphosphate: step 4/9. The polypeptide is 1-(5-phosphoribosyl)-5-[(5-phosphoribosylamino)methylideneamino] imidazole-4-carboxamide isomerase (Actinobacillus succinogenes (strain ATCC 55618 / DSM 22257 / CCUG 43843 / 130Z)).